We begin with the raw amino-acid sequence, 433 residues long: Histidine--tRNA ligase (433 aa).

This sequence belongs to the class-II aminoacyl-tRNA synthetase family. Homodimer.

The protein resides in the cytoplasm. It catalyses the reaction tRNA(His) + L-histidine + ATP = L-histidyl-tRNA(His) + AMP + diphosphate + H(+). The protein is Histidine--tRNA ligase of Pseudothermotoga lettingae (strain ATCC BAA-301 / DSM 14385 / NBRC 107922 / TMO) (Thermotoga lettingae).